The chain runs to 146 residues: Core protein OPG114 (146 aa).

This sequence belongs to the orthopoxvirus OPG114 family. In terms of assembly, part of a complex composed of the kinase OPG054, OPG092, OPG100, OPG114, OPG115, OPG142 and OPG157.

It localises to the virion. In terms of biological role, late protein which is part of a large complex required for early virion morphogenesis. This complex participates in the formation of virosomes and the incorporation of virosomal contents into nascent immature virions. The chain is Core protein OPG114 (OPG114) from Monkeypox virus.